Consider the following 937-residue polypeptide: CAP-Gly domain-containing linker protein 1 homolog (937 aa).

The 43-residue stretch at G39 to P81 folds into the CAP-Gly domain. 2 disordered regions span residues E90 to T131 and L264 to Q548. Residues L268–F281 are compositionally biased toward polar residues. The span at E285–G295 shows a compositional bias: basic and acidic residues. The segment covering N296 to P309 has biased composition (polar residues). Composition is skewed to basic and acidic residues over residues H317–P353, I383–S396, P409–R424, and A463–I473. Residues S492–S501 are compositionally biased toward low complexity. Coiled coils occupy residues E566–I740 and Q773–Q800. Disordered stretches follow at residues M819 to N866 and P916 to M937. Positions R832–S844 are enriched in low complexity. Residues M845–S858 show a composition bias toward polar residues.

The sequence is that of CAP-Gly domain-containing linker protein 1 homolog from Caenorhabditis elegans.